Reading from the N-terminus, the 215-residue chain is Cytochrome b6 (215 aa).

Residues 32–52 (IFYCLGGITLTCFLVQVATGF) form a helical membrane-spanning segment. A heme c-binding site is contributed by C35. The heme b site is built by H86 and H100. The next 3 helical transmembrane spans lie at 90–110 (ASMMVLMMILHVFRVYLTGGF), 116–136 (LTWVTGVVLGVLTASFGVTGY), and 186–206 (LHTFVLPLLTAVFMLMHFPMI). Heme b-binding residues include H187 and H202.

Belongs to the cytochrome b family. PetB subfamily. The 4 large subunits of the cytochrome b6-f complex are cytochrome b6, subunit IV (17 kDa polypeptide, PetD), cytochrome f and the Rieske protein, while the 4 small subunits are PetG, PetL, PetM and PetN. The complex functions as a dimer. Heme b serves as cofactor. It depends on heme c as a cofactor.

Its subcellular location is the plastid. The protein localises to the chloroplast thylakoid membrane. Its function is as follows. Component of the cytochrome b6-f complex, which mediates electron transfer between photosystem II (PSII) and photosystem I (PSI), cyclic electron flow around PSI, and state transitions. The polypeptide is Cytochrome b6 (Jasminum nudiflorum (Winter jasmine)).